The primary structure comprises 408 residues: DNA replication and repair protein RecF (408 aa).

30–37 (GSNGQGKT) lines the ATP pocket. Disordered stretches follow at residues 220–252 (DHGP…DGGR) and 389–408 (SPTP…GGAA). A compositionally biased stretch (low complexity) spans 389-402 (SPTPASASEPASPG).

Belongs to the RecF family.

The protein resides in the cytoplasm. In terms of biological role, the RecF protein is involved in DNA metabolism; it is required for DNA replication and normal SOS inducibility. RecF binds preferentially to single-stranded, linear DNA. It also seems to bind ATP. This Clavibacter sepedonicus (Clavibacter michiganensis subsp. sepedonicus) protein is DNA replication and repair protein RecF.